The primary structure comprises 702 residues: Penicillin-binding protein activator LpoA (702 aa).

Residues 1-26 (MVPSTFLRSKPARCLPVLLATLIFAG) form the signal peptide. Cys-27 is lipidated: N-palmitoyl cysteine. Cys-27 carries the S-diacylglycerol cysteine lipid modification. The segment at 327–378 (GSRADPVQAPTQDQAAPAAEPAAQAPATSTTPQTTASPATQPVTAPAAQPQP) is disordered. A compositionally biased stretch (low complexity) spans 330–378 (ADPVQAPTQDQAAPAAEPAAQAPATSTTPQTTASPATQPVTAPAAQPQP).

The protein belongs to the LpoA family. Interacts with PBP1a.

The protein resides in the cell outer membrane. In terms of biological role, regulator of peptidoglycan synthesis that is essential for the function of penicillin-binding protein 1A (PBP1a). This chain is Penicillin-binding protein activator LpoA, found in Klebsiella pneumoniae subsp. pneumoniae (strain ATCC 700721 / MGH 78578).